Reading from the N-terminus, the 173-residue chain is Photosystem I assembly protein Ycf3 (173 aa).

TPR repeat units follow at residues 35–68 (AFSYYRDGMSAQSEGEYAEALENYYEALKLEEDP), 72–105 (SYILYNIGLIYASNGEYVKALEYYHQGLELNFKL), and 120–153 (GVQAIEDKDTELSKLMFDKAAQYWQQAIKLAPDN).

The protein belongs to the Ycf3 family.

It is found in the plastid. The protein resides in the chloroplast thylakoid membrane. Functionally, essential for the assembly of the photosystem I (PSI) complex. May act as a chaperone-like factor to guide the assembly of the PSI subunits. The chain is Photosystem I assembly protein Ycf3 from Pyropia yezoensis (Susabi-nori).